Consider the following 316-residue polypeptide: ATP synthase gamma chain (316 aa).

This sequence belongs to the ATPase gamma chain family. F-type ATPases have 2 components, CF(1) - the catalytic core - and CF(0) - the membrane proton channel. CF(1) has five subunits: alpha(3), beta(3), gamma(1), delta(1), epsilon(1). CF(0) has three main subunits: a, b and c.

It localises to the cellular thylakoid membrane. Produces ATP from ADP in the presence of a proton gradient across the membrane. The gamma chain is believed to be important in regulating ATPase activity and the flow of protons through the CF(0) complex. In Prochlorococcus marinus (strain MIT 9215), this protein is ATP synthase gamma chain.